The primary structure comprises 266 residues: Dihydropteroate synthase (266 aa).

A Pterin-binding domain is found at 12–260 (AAIMGILNVT…DVKANQDIVA (249 aa)). N19 is a binding site for Mg(2+). Residues T59, D93, N112, D176, K212, and 248–250 (RVH) each bind (7,8-dihydropterin-6-yl)methyl diphosphate.

It belongs to the DHPS family. As to quaternary structure, homodimer or homotrimer. Requires Mg(2+) as cofactor.

The enzyme catalyses (7,8-dihydropterin-6-yl)methyl diphosphate + 4-aminobenzoate = 7,8-dihydropteroate + diphosphate. It functions in the pathway cofactor biosynthesis; tetrahydrofolate biosynthesis; 7,8-dihydrofolate from 2-amino-4-hydroxy-6-hydroxymethyl-7,8-dihydropteridine diphosphate and 4-aminobenzoate: step 1/2. Its function is as follows. Catalyzes the condensation of para-aminobenzoate (pABA) with 6-hydroxymethyl-7,8-dihydropterin diphosphate (DHPt-PP) to form 7,8-dihydropteroate (H2Pte), the immediate precursor of folate derivatives. The chain is Dihydropteroate synthase (folP) from Streptococcus pyogenes serotype M6 (strain ATCC BAA-946 / MGAS10394).